The following is a 275-amino-acid chain: MPELPEVETVMRGLAAKLEGRRLARVVLARPDLRWPIPEGFVQFLSGARVEGFRRRGKYMFMRLDRALSVLIHLGMSGRMTIDSAPLPHQHLTLETDDGAVIGFVDPRRFGALDLVATAAEDSHRLIAGLGPEPLDDAFSPATLASALEGKKTPIKAALLDQSVVAGLGNIYVSEALFRAGILPHRLAGTIGRGRAGRLVPAIKATLTDAIAAGGSSLRDYVQPSGELGYFQHAWKVYDRAGQPCERCPGPAACAGISRTVQSGRATYFCARTQK.

P2 (schiff-base intermediate with DNA) is an active-site residue. Catalysis depends on E3, which acts as the Proton donor. K58 (proton donor; for beta-elimination activity) is an active-site residue. Positions 89, 108, and 151 each coordinate DNA. The FPG-type; degenerate zinc-finger motif lies at 236–275 (KVYDRAGQPCERCPGPAACAGISRTVQSGRATYFCARTQK). R265 (proton donor; for delta-elimination activity) is an active-site residue.

Belongs to the FPG family. Monomer. The cofactor is Zn(2+).

It catalyses the reaction Hydrolysis of DNA containing ring-opened 7-methylguanine residues, releasing 2,6-diamino-4-hydroxy-5-(N-methyl)formamidopyrimidine.. The catalysed reaction is 2'-deoxyribonucleotide-(2'-deoxyribose 5'-phosphate)-2'-deoxyribonucleotide-DNA = a 3'-end 2'-deoxyribonucleotide-(2,3-dehydro-2,3-deoxyribose 5'-phosphate)-DNA + a 5'-end 5'-phospho-2'-deoxyribonucleoside-DNA + H(+). Its function is as follows. Involved in base excision repair of DNA damaged by oxidation or by mutagenic agents. Acts as a DNA glycosylase that recognizes and removes damaged bases. Has a preference for oxidized purines, such as 7,8-dihydro-8-oxoguanine (8-oxoG). Has AP (apurinic/apyrimidinic) lyase activity and introduces nicks in the DNA strand. Cleaves the DNA backbone by beta-delta elimination to generate a single-strand break at the site of the removed base with both 3'- and 5'-phosphates. In Acidiphilium cryptum (strain JF-5), this protein is Formamidopyrimidine-DNA glycosylase.